The primary structure comprises 354 residues: UDP-N-acetylglucosamine--N-acetylmuramyl-(pentapeptide) pyrophosphoryl-undecaprenol N-acetylglucosamine transferase 3 (354 aa).

UDP-N-acetyl-alpha-D-glucosamine-binding positions include 12 to 14 (TAG), Arg163, Ser193, and Gln287.

This sequence belongs to the glycosyltransferase 28 family. MurG subfamily.

It is found in the cell membrane. The catalysed reaction is di-trans,octa-cis-undecaprenyl diphospho-N-acetyl-alpha-D-muramoyl-L-alanyl-D-glutamyl-meso-2,6-diaminopimeloyl-D-alanyl-D-alanine + UDP-N-acetyl-alpha-D-glucosamine = di-trans,octa-cis-undecaprenyl diphospho-[N-acetyl-alpha-D-glucosaminyl-(1-&gt;4)]-N-acetyl-alpha-D-muramoyl-L-alanyl-D-glutamyl-meso-2,6-diaminopimeloyl-D-alanyl-D-alanine + UDP + H(+). The protein operates within cell wall biogenesis; peptidoglycan biosynthesis. Cell wall formation. Catalyzes the transfer of a GlcNAc subunit on undecaprenyl-pyrophosphoryl-MurNAc-pentapeptide (lipid intermediate I) to form undecaprenyl-pyrophosphoryl-MurNAc-(pentapeptide)GlcNAc (lipid intermediate II). The polypeptide is UDP-N-acetylglucosamine--N-acetylmuramyl-(pentapeptide) pyrophosphoryl-undecaprenol N-acetylglucosamine transferase 3 (Bacillus cereus (strain ATCC 14579 / DSM 31 / CCUG 7414 / JCM 2152 / NBRC 15305 / NCIMB 9373 / NCTC 2599 / NRRL B-3711)).